We begin with the raw amino-acid sequence, 184 residues long: 1,6-anhydro-N-acetylmuramyl-L-alanine amidase AmpD (184 aa).

The N-acetylmuramoyl-L-alanine amidase domain maps to 30–171 (QDISLLVIHY…ISPKRKIDPG (142 aa)). Histidine 38 provides a ligand contact to Zn(2+). Glutamate 120 acts as the Proton acceptor in catalysis. Zn(2+) contacts are provided by histidine 159 and aspartate 169.

This sequence belongs to the N-acetylmuramoyl-L-alanine amidase 2 family. Zn(2+) is required as a cofactor.

The protein resides in the cytoplasm. The catalysed reaction is Hydrolyzes the link between N-acetylmuramoyl residues and L-amino acid residues in certain cell-wall glycopeptides.. Involved in cell wall peptidoglycan recycling. Specifically cleaves the amide bond between the lactyl group of N-acetylmuramic acid and the alpha-amino group of the L-alanine in degradation products containing an anhydro N-acetylmuramyl moiety. The protein is 1,6-anhydro-N-acetylmuramyl-L-alanine amidase AmpD (ampD) of Haemophilus influenzae (strain ATCC 51907 / DSM 11121 / KW20 / Rd).